Here is a 295-residue protein sequence, read N- to C-terminus: Regucalcin (295 aa).

A divalent metal cation is bound at residue glutamate 18. Arginine 100, asparagine 102, and aspartate 120 together coordinate substrate. Positions 150 and 200 each coordinate a divalent metal cation. The active-site Proton donor/acceptor is the aspartate 200.

This sequence belongs to the SMP-30/CGR1 family. Zn(2+) serves as cofactor. It depends on Mn(2+) as a cofactor. Ca(2+) is required as a cofactor. The cofactor is Mg(2+).

It is found in the cytoplasm. The catalysed reaction is D-glucono-1,5-lactone + H2O = D-gluconate + H(+). It participates in cofactor biosynthesis; L-ascorbate biosynthesis via UDP-alpha-D-glucuronate pathway; L-ascorbate from UDP-alpha-D-glucuronate: step 3/4. Gluconolactonase with low activity towards other sugar lactones, including gulonolactone and galactonolactone. Catalyzes a key step in ascorbic acid (vitamin C) biosynthesis. Can also hydrolyze diisopropyl phosphorofluoridate and phenylacetate (in vitro). Calcium-binding protein. Modulates Ca(2+) signaling, and Ca(2+)-dependent cellular processes and enzyme activities. The polypeptide is Regucalcin (Danio rerio (Zebrafish)).